A 424-amino-acid chain; its full sequence is Histidine--tRNA ligase (424 aa).

This sequence belongs to the class-II aminoacyl-tRNA synthetase family. As to quaternary structure, homodimer.

It localises to the cytoplasm. It carries out the reaction tRNA(His) + L-histidine + ATP = L-histidyl-tRNA(His) + AMP + diphosphate + H(+). The sequence is that of Histidine--tRNA ligase from Staphylococcus epidermidis (strain ATCC 12228 / FDA PCI 1200).